Reading from the N-terminus, the 301-residue chain is Probable alpha-L-glutamate ligase 1 (301 aa).

One can recognise an ATP-grasp domain in the interval 104–287 (LQLLSRKGIG…VTEPIVEYIE (184 aa)). ATP-binding positions include lysine 141, 178 to 179 (EY), aspartate 187, and 211 to 213 (RSN). Mg(2+) contacts are provided by aspartate 248, glutamate 260, and asparagine 262. Mn(2+)-binding residues include aspartate 248, glutamate 260, and asparagine 262.

This sequence belongs to the RimK family. The cofactor is Mg(2+). Mn(2+) serves as cofactor.

The protein is Probable alpha-L-glutamate ligase 1 of Shewanella baltica (strain OS155 / ATCC BAA-1091).